Reading from the N-terminus, the 359-residue chain is Histamine H2 receptor (359 aa).

The Extracellular portion of the chain corresponds to 1-22; that stretch reads MISNGTGSSFCLDSPPCRITVS. Asparagine 4 is a glycosylation site (N-linked (GlcNAc...) asparagine). The helical transmembrane segment at 23–44 threads the bilayer; sequence VVLTVLILITIAGNVVVCLAVG. The Cytoplasmic segment spans residues 45-57; that stretch reads LNRRLRSLTNCFI. The helical transmembrane segment at 58–81 threads the bilayer; sequence VSLAITDLLLGLLVLPFSAFYQLS. Residues 82–92 lie on the Extracellular side of the membrane; it reads CRWSFGKVFCN. An intrachain disulfide couples cysteine 91 to cysteine 174. A helical membrane pass occupies residues 93–114; the sequence is IYTSLDVMLCTASILNLFMISL. Residues 115-134 are Cytoplasmic-facing; that stretch reads DRYCAVTDPLRYPVLITPVR. A helical membrane pass occupies residues 135-159; that stretch reads VAVSLVLIWVISITLSFLSIHLGWN. Residues 160–180 lie on the Extracellular side of the membrane; it reads SRNETSSFNHTIPKCKVQVNL. The chain crosses the membrane as a helical span at residues 181 to 204; it reads VYGLVDGLVTFYLPLLVMCITYYR. At 205–234 the chain is on the cytoplasmic side; sequence IFKIARDQAKRIHHMGSWKAATIGEHKATV. The chain crosses the membrane as a helical span at residues 235–258; sequence TLAAVMGAFIICWFPYFTVFVYRG. Topologically, residues 259-267 are extracellular; it reads LKGDDAINE. A helical membrane pass occupies residues 268–289; that stretch reads AFEAVVLWLGYANSALNPILYA. Residues 290-359 are Cytoplasmic-facing; sequence TLNRDFRTAY…VTAPRGATDR (70 aa). A lipid anchor (S-palmitoyl cysteine) is attached at cysteine 305. Polar residues predominate over residues 310–327; it reads HNAQETSLRSNSSQLARN. A disordered region spans residues 310 to 359; the sequence is HNAQETSLRSNSSQLARNQSREPMRQEEKPLKLQVWSGTEVTAPRGATDR. Over residues 328-340 the composition is skewed to basic and acidic residues; it reads QSREPMRQEEKPL.

The protein belongs to the G-protein coupled receptor 1 family. In terms of tissue distribution, gastric fundus and, to a lesser extent, in brain.

The protein resides in the cell membrane. The H2 subclass of histamine receptors mediates gastric acid secretion. The activity of this receptor is mediated by G proteins which activate adenylyl cyclase. The sequence is that of Histamine H2 receptor (HRH2) from Canis lupus familiaris (Dog).